Consider the following 453-residue polypeptide: Gastrin/cholecystokinin type B receptor (453 aa).

Topologically, residues 1–57 (MELLKLNRSAQGSGAGPGASLCRAGGALLNSSGAGNLSCEPPRLRGAGTRELELAIR) are extracellular. Asparagine 7, asparagine 30, and asparagine 36 each carry an N-linked (GlcNAc...) asparagine glycan. Residues 58–79 (VTLYAVIFLMSVGGNVLIIVVL) form a helical membrane-spanning segment. Residues 80–87 (GLSRRLRT) lie on the Cytoplasmic side of the membrane. The helical transmembrane segment at 88-109 (VTNAFLLSLAVSDLLLAVACMP) threads the bilayer. The Extracellular segment spans residues 110–131 (FTLLPNLMGTFIFGTVVCKAVS). Cysteine 127 and cysteine 206 are oxidised to a cystine. The chain crosses the membrane as a helical span at residues 132–150 (YLMGVSVSVSTLSLVAIAL). Topologically, residues 151–170 (ERYSAICRPLQARVWQTRSH) are cytoplasmic. Residues 171–189 (AARVIIATWMLSGLLMVPY) form a helical membrane-spanning segment. Residues 190-220 (PVYTAVQPAGGARALQCVHRWPSARVRQTWS) lie on the Extracellular side of the membrane. The chain crosses the membrane as a helical span at residues 221 to 243 (VLLLLLLFFVPGVVMAVAYGLIS). Residues 244–339 (RELYLGLRFD…KLLAKKRVVR (96 aa)) are Cytoplasmic-facing. Residues 258 to 286 (SESRVRSQGGLRGGAGPGPAPPNGSCRPE) form a disordered region. A helical transmembrane segment spans residues 340-361 (MLLVIVVLFFLCWLPLYSANTW). The Extracellular segment spans residues 362 to 379 (RAFDSSGAHRALSGAPIS). The helical transmembrane segment at 380 to 400 (FIHLLSYASACVNPLVYCFMH) threads the bilayer. The Cytoplasmic segment spans residues 401–453 (RRFRQACLETCARCCPRPPRARPRPLPDEDPPTPSIASLSRLSYTTISTLGPG). Cysteine 414 is lipidated: S-palmitoyl cysteine. A disordered region spans residues 422-453 (RPRPLPDEDPPTPSIASLSRLSYTTISTLGPG). The span at 435–453 (SIASLSRLSYTTISTLGPG) shows a compositional bias: polar residues.

It belongs to the G-protein coupled receptor 1 family. Parietal cells, pancreas, brain and various neoplastic tissues.

The protein resides in the cell membrane. Its function is as follows. Receptor for gastrin and cholecystokinin. The CCK-B receptors occur throughout the central nervous system where they modulate anxiety, analgesia, arousal, and neuroleptic activity. This receptor mediates its action by association with G proteins that activate a phosphatidylinositol-calcium second messenger system. The protein is Gastrin/cholecystokinin type B receptor (CCKBR) of Canis lupus familiaris (Dog).